Reading from the N-terminus, the 284-residue chain is 2-dehydro-3-deoxyphosphooctonate aldolase (284 aa).

It belongs to the KdsA family.

It localises to the cytoplasm. It carries out the reaction D-arabinose 5-phosphate + phosphoenolpyruvate + H2O = 3-deoxy-alpha-D-manno-2-octulosonate-8-phosphate + phosphate. The protein operates within carbohydrate biosynthesis; 3-deoxy-D-manno-octulosonate biosynthesis; 3-deoxy-D-manno-octulosonate from D-ribulose 5-phosphate: step 2/3. It participates in bacterial outer membrane biogenesis; lipopolysaccharide biosynthesis. The sequence is that of 2-dehydro-3-deoxyphosphooctonate aldolase from Salmonella enteritidis PT4 (strain P125109).